We begin with the raw amino-acid sequence, 162 residues long: Ecotin (162 aa).

Positions 1 to 18 (MKMFVPAVVFAASASAWA) are cleaved as a signal peptide. Cys-70 and Cys-107 are disulfide-bonded.

It belongs to the protease inhibitor I11 (ecotin) family. As to quaternary structure, homodimer.

It is found in the periplasm. General inhibitor of pancreatic serine proteases: inhibits chymotrypsin, trypsin, elastases, factor X, kallikrein as well as a variety of other proteases. This Salmonella arizonae (strain ATCC BAA-731 / CDC346-86 / RSK2980) protein is Ecotin.